The following is a 229-amino-acid chain: Orotidine 5'-phosphate decarboxylase (229 aa).

Residues D10, K32, 59 to 68, T119, R180, Q189, G209, and R210 each bind substrate; that span reads DLKFHDIPNT. K61 functions as the Proton donor in the catalytic mechanism.

It belongs to the OMP decarboxylase family. Type 1 subfamily. Homodimer.

It carries out the reaction orotidine 5'-phosphate + H(+) = UMP + CO2. Its pathway is pyrimidine metabolism; UMP biosynthesis via de novo pathway; UMP from orotate: step 2/2. Catalyzes the decarboxylation of orotidine 5'-monophosphate (OMP) to uridine 5'-monophosphate (UMP). This chain is Orotidine 5'-phosphate decarboxylase, found in Legionella pneumophila (strain Corby).